Consider the following 215-residue polypeptide: Cytochrome b6 (215 aa).

Residues 32–52 (IFYCLGGITLTCFLVQVATGF) form a helical membrane-spanning segment. Cys-35 is a binding site for heme c. Residues His-86 and His-100 each coordinate heme b. A run of 3 helical transmembrane segments spans residues 90-110 (ASMM…TGGF), 116-136 (LTWV…VTGY), and 186-206 (LHTF…FPMI). Residues His-187 and His-202 each coordinate heme b.

Belongs to the cytochrome b family. PetB subfamily. As to quaternary structure, the 4 large subunits of the cytochrome b6-f complex are cytochrome b6, subunit IV (17 kDa polypeptide, PetD), cytochrome f and the Rieske protein, while the 4 small subunits are PetG, PetL, PetM and PetN. The complex functions as a dimer. It depends on heme b as a cofactor. Heme c serves as cofactor.

It localises to the plastid. It is found in the chloroplast thylakoid membrane. Component of the cytochrome b6-f complex, which mediates electron transfer between photosystem II (PSII) and photosystem I (PSI), cyclic electron flow around PSI, and state transitions. The polypeptide is Cytochrome b6 (Phalaenopsis aphrodite subsp. formosana (Moth orchid)).